A 505-amino-acid chain; its full sequence is Probable cytosol aminopeptidase (505 aa).

Lys268 and Asp273 together coordinate Mn(2+). Lys280 is an active-site residue. Residues Asp291, Asp350, and Glu352 each coordinate Mn(2+). Arg354 is an active-site residue.

The protein belongs to the peptidase M17 family. Mn(2+) is required as a cofactor.

The protein localises to the cytoplasm. The enzyme catalyses Release of an N-terminal amino acid, Xaa-|-Yaa-, in which Xaa is preferably Leu, but may be other amino acids including Pro although not Arg or Lys, and Yaa may be Pro. Amino acid amides and methyl esters are also readily hydrolyzed, but rates on arylamides are exceedingly low.. It carries out the reaction Release of an N-terminal amino acid, preferentially leucine, but not glutamic or aspartic acids.. Its function is as follows. Presumably involved in the processing and regular turnover of intracellular proteins. Catalyzes the removal of unsubstituted N-terminal amino acids from various peptides. The polypeptide is Probable cytosol aminopeptidase (Syntrophobacter fumaroxidans (strain DSM 10017 / MPOB)).